We begin with the raw amino-acid sequence, 303 residues long: Lipoyl synthase (303 aa).

Cys-34, Cys-39, Cys-45, Cys-60, Cys-64, Cys-67, and Ser-273 together coordinate [4Fe-4S] cluster. The Radical SAM core domain occupies 46 to 262 (WSKKHATVMI…ERVARTKGFL (217 aa)).

The protein belongs to the radical SAM superfamily. Lipoyl synthase family. The cofactor is [4Fe-4S] cluster.

It is found in the cytoplasm. It carries out the reaction [[Fe-S] cluster scaffold protein carrying a second [4Fe-4S](2+) cluster] + N(6)-octanoyl-L-lysyl-[protein] + 2 oxidized [2Fe-2S]-[ferredoxin] + 2 S-adenosyl-L-methionine + 4 H(+) = [[Fe-S] cluster scaffold protein] + N(6)-[(R)-dihydrolipoyl]-L-lysyl-[protein] + 4 Fe(3+) + 2 hydrogen sulfide + 2 5'-deoxyadenosine + 2 L-methionine + 2 reduced [2Fe-2S]-[ferredoxin]. It participates in protein modification; protein lipoylation via endogenous pathway; protein N(6)-(lipoyl)lysine from octanoyl-[acyl-carrier-protein]: step 2/2. Catalyzes the radical-mediated insertion of two sulfur atoms into the C-6 and C-8 positions of the octanoyl moiety bound to the lipoyl domains of lipoate-dependent enzymes, thereby converting the octanoylated domains into lipoylated derivatives. This Rickettsia bellii (strain OSU 85-389) protein is Lipoyl synthase.